The following is a 64-amino-acid chain: Phylloxin-B1 (64 aa).

The first 22 residues, 1 to 22, serve as a signal peptide directing secretion; the sequence is MVFLKKSLLLVLFVGLVSLSIC. Residues 23-42 constitute a propeptide that is removed on maturation; that stretch reads EENKREEHEEIEENKEKAEE. Position 63 is a glutamine amide (Q63).

As to expression, expressed by the skin glands.

The protein localises to the secreted. In terms of biological role, antimicrobial peptide against the wall-less bacteria A.laidlawii and S.melliferum, the Gram-positive bacteria B.megaterium KM, C.glutamicum ATCC 27853 and M.luteus ATCC 27853 and the Gram-negative-bacteria R.meliloti 102F34 and E.coli K12. This is Phylloxin-B1 from Phyllomedusa bicolor (Two-colored leaf frog).